A 143-amino-acid chain; its full sequence is Small ribosomal subunit protein uS9 (143 aa).

Residues 124–143 are disordered; sequence PEPKKFGGKGARARFQKSYR. Positions 134 to 143 are enriched in basic residues; that stretch reads ARARFQKSYR.

Belongs to the universal ribosomal protein uS9 family.

The chain is Small ribosomal subunit protein uS9 (RPS16) from Candida glabrata (strain ATCC 2001 / BCRC 20586 / JCM 3761 / NBRC 0622 / NRRL Y-65 / CBS 138) (Yeast).